The following is a 427-amino-acid chain: G2/mitotic-specific cyclin-B1 (427 aa).

The tract at residues 33–126 (ATSKPGLRPR…DTPSPSPMET (94 aa)) is disordered. Lys73 is subject to N6-acetyllysine. The segment covering 100 to 110 (EPEHVKEDKLS) has biased composition (basic and acidic residues). A Phosphoserine; by CDK1 modification is found at Ser120. Phosphoserine is present on Ser122. The residue at position 127 (Ser127) is a Phosphoserine; by PLK1. Residue Ser141 is modified to Phosphoserine. Interaction with CDK2 regions lie at residues 163 to 171 (EYVKDIYAY) and 252 to 255 (YEEM). A Phosphothreonine modification is found at Thr315.

The protein belongs to the cyclin family. Cyclin AB subfamily. In terms of assembly, interacts with the CDC2 protein kinase to form a serine/threonine kinase holoenzyme complex also known as maturation promoting factor (MPF). The cyclin subunit imparts substrate specificity to the complex. Binds HEI10. Interacts with catalytically active RALBP1 and CDC2 during mitosis to form an endocytotic complex during interphase. Interacts with CCNF; interaction is required for nuclear localization. Interacts with CDK5RAP3. Interacts with RFPL4A and UBE2A. Interacts with INCA1. Post-translationally, ubiquitinated by the SCF(NIPA) complex during interphase, leading to its destruction. Deubiquitinated by USP22 during G2/M phase. Phosphorylated by PLK1 at Ser-127 on centrosomes during prophase: phosphorylation by PLK1 does not cause nuclear import. Phosphorylation at Ser-141 was also reported to be mediated by PLK1 but Ser-127 seems to be the primary phosphorylation site.

The protein resides in the cytoplasm. The protein localises to the nucleus. Its subcellular location is the cytoskeleton. It is found in the microtubule organizing center. It localises to the centrosome. In terms of biological role, essential for the control of the cell cycle at the G2/M (mitosis) transition. In Bos taurus (Bovine), this protein is G2/mitotic-specific cyclin-B1 (CCNB1).